The sequence spans 93 residues: Large ribosomal subunit protein eL31 (93 aa).

It belongs to the eukaryotic ribosomal protein eL31 family.

The chain is Large ribosomal subunit protein eL31 from Methanosarcina mazei (strain ATCC BAA-159 / DSM 3647 / Goe1 / Go1 / JCM 11833 / OCM 88) (Methanosarcina frisia).